The chain runs to 96 residues: Large ribosomal subunit protein uL23 (96 aa).

It belongs to the universal ribosomal protein uL23 family. As to quaternary structure, part of the 50S ribosomal subunit. Contacts protein L29, and trigger factor when it is bound to the ribosome.

In terms of biological role, one of the early assembly proteins it binds 23S rRNA. One of the proteins that surrounds the polypeptide exit tunnel on the outside of the ribosome. Forms the main docking site for trigger factor binding to the ribosome. In Nitratidesulfovibrio vulgaris (strain ATCC 29579 / DSM 644 / CCUG 34227 / NCIMB 8303 / VKM B-1760 / Hildenborough) (Desulfovibrio vulgaris), this protein is Large ribosomal subunit protein uL23.